The sequence spans 537 residues: MPGSPRRAPGLLLQALVAMVSLALVAPFGLQPALWPMPRSVQVFPRLLYISPENFQIDNSPNSTAGPSCSLLLEAFRRYYNYIFGFYKRHHGPAKFQDKPQLEKLLVFINLEPQCDAFPSMSSDESYSLLVQEPVALLKANEVWGALRGLETFSQLVYQDAYGTFTINESTIADSPRFPHRGILIDTSRHYLPVKTIFKTLDAMAFNKFNVLHWHIVDDQSFPYQSITFPELSNKGSYSLSHVYTPNDIHMVLEYARLRGIRVIPEFDSPGHTQSWGKGQKNLLTPCFIQKIRTQKVGPVDPSLNTTYVFFDTFFKEISRVFPDQFIHLGGDEVEFECWASNPNIQNFMKKKGFGNNFRRLESFYIKKILDIITSLKKSSIVWQDVFDDQVELQPGTVVEVWKSENYLNELAQVTASGFPAILSAPWYLDLISYGQDWRNYYKAEPLNFEGSEKQKQLVIGGEACLWGEYVDATNLIPRLWPRASAVGERLWSPRIITNLENAYRRLAVHRCRMVSRGIAAQPLFTGYCNYENKMEK.

The N-terminal stretch at 1–23 (MPGSPRRAPGLLLQALVAMVSLA) is a signal peptide. An N-linked (GlcNAc...) asparagine glycan is attached at N62. C69 and C115 are disulfide-bonded. 2 N-linked (GlcNAc...) asparagine glycosylation sites follow: N168 and N305. 2 disulfides stabilise this stretch: C287/C338 and C512/C529. E333 serves as the catalytic Proton donor.

Belongs to the glycosyl hydrolase 20 family. There are 3 forms of beta-hexosaminidase: hexosaminidase A is a heterodimer composed of one subunit alpha and one subunit beta (chain A and B); hexosaminidase B is a homodimer of two beta subunits (two chains A and B); hexosaminidase S is a homodimer of two alpha subunits. The composition of the dimer (isozyme A versus isozyme S) has a significant effect on the substrate specificity of the alpha subunit active site.

Its subcellular location is the lysosome. It localises to the cytoplasmic vesicle. It is found in the secretory vesicle. The protein localises to the cortical granule. It carries out the reaction Hydrolysis of terminal non-reducing N-acetyl-D-hexosamine residues in N-acetyl-beta-D-hexosaminides.. The catalysed reaction is N-acetyl-beta-D-galactosaminyl-(1-&gt;4)-beta-D-3-sulfogalactosyl-(1-&gt;4)-beta-D-glucosyl-(1&lt;-&gt;1')-ceramide + H2O = a beta-D-3-sulfogalactosyl-(1-&gt;4)-beta-D-glucosyl-(1&lt;-&gt;1')-ceramide + N-acetyl-beta-D-galactosamine. It catalyses the reaction a ganglioside GM2 (d18:1(4E)) + H2O = a ganglioside GM3 (d18:1(4E)) + N-acetyl-beta-D-galactosamine. The enzyme catalyses a ganglioside GM2 + H2O = a ganglioside GM3 + N-acetyl-beta-D-galactosamine. It carries out the reaction beta-D-GalNAc-(1-&gt;4)-alpha-L-IdoA-(1-&gt;3)-beta-D-GalNAc-4-sulfate-(1-&gt;4)-alpha-L-IdoA-(1-&gt;3)-D-GalNAc-4-sulfate + H2O = alpha-L-IdoA-(1-&gt;3)-beta-D-GalNAc-4-sulfate-(1-&gt;4)-alpha-L-IdoA-(1-&gt;3)-D-GalNAc-4-sulfate + N-acetyl-D-galactosamine. The catalysed reaction is N-acetyl-beta-D-6-sulfogalactosaminyl-(1-&gt;4)-alpha-L-iduronyl-(1-&gt;3)-N-acetyl-D-6-sulfogalactosamine + H2O = alpha-L-iduronyl-(1-&gt;3)-N-acetyl-D-6-sulfogalactosamine + N-acetyl-D-6-sulfogalactosamine. Its activity is regulated as follows. Addition of GM2A stimulates the hydrolysis of sulfated glycosphingolipid SM2 and the ganglioside GM2. In terms of biological role, hydrolyzes the non-reducing end N-acetyl-D-hexosamine and/or sulfated N-acetyl-D-hexosamine of glycoconjugates, such as the oligosaccharide moieties from proteins and neutral glycolipids, or from certain mucopolysaccharides. The isozyme B does not hydrolyze each of these substrates, however hydrolyzes efficiently neutral oligosaccharide. Only the isozyme A is responsible for the degradation of GM2 gangliosides in the presence of GM2A. During fertilization is responsible, at least in part, for the zona block to polyspermy. Present in the cortical granules of non-activated oocytes, is exocytosed during the cortical reaction in response to oocyte activation and inactivates the sperm galactosyltransferase-binding site, accounting for the block in sperm binding to the zona pellucida. The sequence is that of Beta-hexosaminidase subunit beta from Rattus norvegicus (Rat).